We begin with the raw amino-acid sequence, 244 residues long: Small ribosomal subunit protein uS3 (244 aa).

Residues 39–107 (VREMLRKKLA…PAHINVTEVR (69 aa)) form the KH type-2 domain. The interval 213 to 244 (VGQEKQDDSPRNDRNDRGDRGDRPSRPAREAR) is disordered. The segment covering 216–244 (EKQDDSPRNDRNDRGDRGDRPSRPAREAR) has biased composition (basic and acidic residues).

The protein belongs to the universal ribosomal protein uS3 family. As to quaternary structure, part of the 30S ribosomal subunit. Forms a tight complex with proteins S10 and S14.

In terms of biological role, binds the lower part of the 30S subunit head. Binds mRNA in the 70S ribosome, positioning it for translation. The polypeptide is Small ribosomal subunit protein uS3 (Xanthomonas campestris pv. campestris (strain 8004)).